A 380-amino-acid polypeptide reads, in one-letter code: MANIRKTHPLLKIINGAFIDLPTPSNISVWWNFGSLLGLCLVTQILTGLFLAMHYTADISTAFSSVAHICRDVNYGWLIRNIHANGASFFFICLYLHVARGMYYGSYLQKETWNIGVILLLLTMMTAFVGYVLPWGQMSFWGATVITNLLSAFPYIGDTLVQWIWGGFSVDNGTLTRFFAFHFLLPFVIAGASMIHLLVLHQTGSNNPTGLNSDADKVTFHPYFSYKDLFGFILMLVGLTSVALFSPNLLGDPDNFTPANPLVTPPHIKPEWYFLFAYAILRSIPNKLGGVLALLFSILVLMLVPMLHTSKQRGNTFRPPSQILFWALVADMLVLTWIGGQPVEHPFVLIGQVASTIYFALFLIALPLTGWLENKALNWN.

The next 4 membrane-spanning stretches (helical) occupy residues 33-53 (FGSLLGLCLVTQILTGLFLAM), 77-98 (WLIRNIHANGASFFFICLYLHV), 113-133 (WNIGVILLLLTMMTAFVGYVL), and 178-198 (FFAFHFLLPFVIAGASMIHLL). Positions 83 and 97 each coordinate heme b. Histidine 182 and histidine 196 together coordinate heme b. Histidine 201 provides a ligand contact to a ubiquinone. 4 helical membrane passes run 226–246 (YKDLFGFILMLVGLTSVALFS), 288–308 (LGGVLALLFSILVLMLVPMLH), 320–340 (PSQILFWALVADMLVLTWIGG), and 347–367 (FVLIGQVASTIYFALFLIALP).

This sequence belongs to the cytochrome b family. The cytochrome bc1 complex contains 3 respiratory subunits (MT-CYB, CYC1 and UQCRFS1), 2 core proteins (UQCRC1 and UQCRC2) and probably 6 low-molecular weight proteins. The cofactor is heme b.

Its subcellular location is the mitochondrion inner membrane. Component of the ubiquinol-cytochrome c reductase complex (complex III or cytochrome b-c1 complex) that is part of the mitochondrial respiratory chain. The b-c1 complex mediates electron transfer from ubiquinol to cytochrome c. Contributes to the generation of a proton gradient across the mitochondrial membrane that is then used for ATP synthesis. The protein is Cytochrome b (mt-cyb) of Acipenser sinensis (Chinese sturgeon).